The chain runs to 293 residues: Methylsterol monooxygenase 1 (293 aa).

Transmembrane regions (helical) follow at residues Leu55–Ile75 and Val100–Thr120. Residues Cys145–Thr274 form the Fatty acid hydroxylase domain. The Histidine box-1 signature appears at His157 to His161. The Histidine box-2 motif lies at His170 to His174. A helical transmembrane segment spans residues Phe199–Ile219. The Histidine box-3 motif lies at His249–Met255.

This sequence belongs to the sterol desaturase family. Fe cation is required as a cofactor. In terms of processing, ubiquitinated by MARCHF6, leading to proteasomal degradation.

The protein resides in the endoplasmic reticulum membrane. It catalyses the reaction 4,4-dimethyl-5alpha-cholest-7-en-3beta-ol + 6 Fe(II)-[cytochrome b5] + 3 O2 + 5 H(+) = 4alpha-carboxy-4beta-methyl-5alpha-cholest-7-ene-3beta-ol + 6 Fe(III)-[cytochrome b5] + 4 H2O. The catalysed reaction is 4,4-dimethyl-5alpha-cholesta-8,24-dien-3beta-ol + 6 Fe(II)-[cytochrome b5] + 3 O2 + 5 H(+) = 4beta-methylzymosterol-4alpha-carboxylate + 6 Fe(III)-[cytochrome b5] + 4 H2O. It carries out the reaction 4alpha-methylzymosterol + 6 Fe(II)-[cytochrome b5] + 3 O2 + 5 H(+) = 4alpha-carboxyzymosterol + 6 Fe(III)-[cytochrome b5] + 4 H2O. The enzyme catalyses 4alpha-methyl-5alpha-cholest-7-en-3beta-ol + 6 Fe(II)-[cytochrome b5] + 3 O2 + 5 H(+) = 4alpha-carboxy-5alpha-cholest-7-en-3beta-ol + 6 Fe(III)-[cytochrome b5] + 4 H2O. It catalyses the reaction 4,4-dimethyl-5alpha-cholest-8-en-3beta-ol + 6 Fe(II)-[cytochrome b5] + 3 O2 + 5 H(+) = 4alpha-carboxy-4beta-methyl-5alpha-cholest-8-en-3beta-ol + 6 Fe(III)-[cytochrome b5] + 4 H2O. The catalysed reaction is 4alpha-methyl-5alpha-cholest-8-en-3beta-ol + 6 Fe(II)-[cytochrome b5] + 3 O2 + 5 H(+) = 4alpha-carboxy-5alpha-cholest-8-ene-3beta-ol + 6 Fe(III)-[cytochrome b5] + 4 H2O. Its pathway is steroid biosynthesis; zymosterol biosynthesis; zymosterol from lanosterol: step 3/6. It functions in the pathway steroid biosynthesis; cholesterol biosynthesis. Its function is as follows. Catalyzes the three-step monooxygenation required for the demethylation of 4,4-dimethyl and 4alpha-methylsterols, which can be subsequently metabolized to cholesterol. This chain is Methylsterol monooxygenase 1 (MSMO1), found in Pongo abelii (Sumatran orangutan).